Consider the following 375-residue polypeptide: Dual-specificity RNA methyltransferase RlmN (375 aa).

The Proton acceptor role is filled by glutamate 94. A Radical SAM core domain is found at 100 to 339 (EDDRATLCVS…VTVRKTRGDD (240 aa)). Cysteine 107 and cysteine 344 form a disulfide bridge. [4Fe-4S] cluster-binding residues include cysteine 114, cysteine 118, and cysteine 121. S-adenosyl-L-methionine contacts are provided by residues 168 to 169 (GE), serine 200, 222 to 224 (SLH), and asparagine 301. The S-methylcysteine intermediate role is filled by cysteine 344.

The protein belongs to the radical SAM superfamily. RlmN family. Requires [4Fe-4S] cluster as cofactor.

Its subcellular location is the cytoplasm. It catalyses the reaction adenosine(2503) in 23S rRNA + 2 reduced [2Fe-2S]-[ferredoxin] + 2 S-adenosyl-L-methionine = 2-methyladenosine(2503) in 23S rRNA + 5'-deoxyadenosine + L-methionine + 2 oxidized [2Fe-2S]-[ferredoxin] + S-adenosyl-L-homocysteine. It carries out the reaction adenosine(37) in tRNA + 2 reduced [2Fe-2S]-[ferredoxin] + 2 S-adenosyl-L-methionine = 2-methyladenosine(37) in tRNA + 5'-deoxyadenosine + L-methionine + 2 oxidized [2Fe-2S]-[ferredoxin] + S-adenosyl-L-homocysteine. In terms of biological role, specifically methylates position 2 of adenine 2503 in 23S rRNA and position 2 of adenine 37 in tRNAs. m2A2503 modification seems to play a crucial role in the proofreading step occurring at the peptidyl transferase center and thus would serve to optimize ribosomal fidelity. The polypeptide is Dual-specificity RNA methyltransferase RlmN (Vibrio campbellii (strain ATCC BAA-1116)).